The chain runs to 707 residues: Protein SGM1 (707 aa).

Residues 1-11 (MSKKLSLEERL) are compositionally biased toward basic and acidic residues. A disordered region spans residues 1–52 (MSKKLSLEERLSLATKKGRKKNKRSTSNLSSPSPVVLSNNEQESARTSIDDA). Ser-2 is subject to N-acetylserine. Low complexity predominate over residues 27 to 40 (SNLSSPSPVVLSNN). Residues 122–473 (VEELVKEISP…KPHQENSNEK (352 aa)) adopt a coiled-coil conformation. Residues Ser-151, Ser-538, Ser-549, Ser-568, Ser-571, Ser-576, and Ser-589 each carry the phosphoserine modification. A coiled-coil region spans residues 594–706 (SAHLVNKLST…QQMVEMQGKM (113 aa)).

It belongs to the SGM1 family. Interacts with YPT6.

Its subcellular location is the golgi apparatus. Functionally, required for normal growth rate on galactose and mannose. The chain is Protein SGM1 (SGM1) from Saccharomyces cerevisiae (strain ATCC 204508 / S288c) (Baker's yeast).